Here is a 774-residue protein sequence, read N- to C-terminus: E3 ubiquitin-protein ligase RFWD3 (774 aa).

Phosphoserine; by ATM and ATR occurs at positions 46 and 63. 3 disordered regions span residues 95 to 116 (NPRTSEQHRQGSDGNHTIPASS), 139 to 225 (PSSS…AEYG), and 257 to 280 (GGKTLPKQPSPQKSEPLLPSASMD). The segment covering 106–116 (SDGNHTIPASS) has biased composition (polar residues). Positions 150 to 162 (RTRRRVSASRRAR) are enriched in basic residues. Over residues 211-221 (SSSSDSDSDSS) the composition is skewed to low complexity. Residues 287–331 (CTICLEQWTNAGDHRLSALRCGHLFGYRCISTWLKGQVRKCPQCN) form an RING-type; degenerate zinc finger. A coiled-coil region spans residues 361-413 (SLLKEQMLRKQAELESAQCRLQLQVLTDKCTRLQRRVQDLQKLTSHQSQNLQQ). WD repeat units lie at residues 495–537 (MHGK…QTYN), 539–577 (GRPVWSCCWCLDEANYIYAGLANGSILVYDVRNTSSHVQ), and 583–628 (KARC…SHWP).

As to quaternary structure, interacts with MDM2 and p53/TP53. Binds to the RPA complex via direct interaction with RPA2. Interacts with RAD51. Phosphorylated at Ser-46 and Ser-63 upon DNA damage by ATM or ATR. ATM phosphorylation occurs at early times upon DNA damage, while ATR is the major kinase at later times. Phosphorylation by ATM and ATR is required to stabilize p53/TP53. Part of the phosphorylation depends upon RPA2 presence.

It is found in the nucleus. It localises to the PML body. The protein localises to the cytoplasm. The enzyme catalyses S-ubiquitinyl-[E2 ubiquitin-conjugating enzyme]-L-cysteine + [acceptor protein]-L-lysine = [E2 ubiquitin-conjugating enzyme]-L-cysteine + N(6)-ubiquitinyl-[acceptor protein]-L-lysine.. It participates in protein modification; protein ubiquitination. Functionally, E3 ubiquitin-protein ligase required for the repair of DNA interstrand cross-links (ICL) in response to DNA damage. Plays a key role in RPA-mediated DNA damage signaling and repair. Acts by mediating ubiquitination of the RPA complex (RPA1, RPA2 and RPA3 subunits) and RAD51 at stalled replication forks, leading to remove them from DNA damage sites and promote homologous recombination. Also mediates the ubiquitination of p53/TP53 in the late response to DNA damage, and acts as a positive regulator of p53/TP53 stability, thereby regulating the G1/S DNA damage checkpoint. May act by catalyzing the formation of short polyubiquitin chains on p53/TP53 that are not targeted to the proteasome. In response to ionizing radiation, interacts with MDM2 and enhances p53/TP53 ubiquitination, possibly by restricting MDM2 from extending polyubiquitin chains on ubiquitinated p53/TP53. Required to translesion DNA synthesis across DNA-protein cross-link adducts by catalyzing ubiquitination of proteins on single-stranded DNA (ssDNA). In Homo sapiens (Human), this protein is E3 ubiquitin-protein ligase RFWD3.